A 456-amino-acid polypeptide reads, in one-letter code: GTPase Der (456 aa).

EngA-type G domains are found at residues Pro-4–Glu-169 and Ile-178–Arg-353. Residues Gly-10–Ser-17, Asp-57–Leu-61, Asn-120–Glu-123, Gly-184–Ser-191, Asp-231–Ile-235, and Asn-296–Asp-299 each bind GTP. Residues Arg-354–Gln-439 enclose the KH-like domain.

The protein belongs to the TRAFAC class TrmE-Era-EngA-EngB-Septin-like GTPase superfamily. EngA (Der) GTPase family. Associates with the 50S ribosomal subunit.

In terms of biological role, GTPase that plays an essential role in the late steps of ribosome biogenesis. This chain is GTPase Der, found in Prochlorococcus marinus (strain MIT 9211).